Reading from the N-terminus, the 322-residue chain is MAVFTPVTLDDLSQWITQFDLGKALAIKGIPSGIENTNFFITTEFGEYVLTIFENLSFEQLPFYLNLMRHLAERGVLVPAPIATHQGNLINALHGKPAAIVSKLEGSSQMEPQAVHCAAVGAMLARMHIAAENFPIRQPNLRGLAWRNETAPIVMPYLSDSNKQLLAEEMAFQNAFAESDTYHQLQNGPIHADLFRNNVMFSGDHLTGFFDFYFAGCDTWLFDVAVTVNDWCIDVETGVLDQERVRAMLDAYHHVRPFTAAEQAAWQTMLRAGALRFWLSRLYDFHLPRDAEMLTPHDPGHFERILRLRIEQATPPLFTSAG.

Belongs to the pseudomonas-type ThrB family.

It carries out the reaction L-homoserine + ATP = O-phospho-L-homoserine + ADP + H(+). Its pathway is amino-acid biosynthesis; L-threonine biosynthesis; L-threonine from L-aspartate: step 4/5. The protein is Homoserine kinase of Janthinobacterium sp. (strain Marseille) (Minibacterium massiliensis).